The sequence spans 1059 residues: MVPEPAPAAATEPRRSTRRRLMTAAAMEAEAEAVADLDEIDREMSRAESRKRQRRTAKEKPGARKGATEWKPEDVEKAAAAEGVAELDEIDREMPRPELRKRQRRTAKEKPSAHEGATEWKPEDVEKAAAQEPEGTELDSGLSPAESRGKRQRGVEKVKRRTRKKTAKEKTKETTEKSAAQAPEKMKVNDAGGALAEDVCADEPDAEQMAMEEEEEAADVLEAEERMGKCVGEGSAEKAATRKRVARPSTARRVEDSDDHFVGDPVPDDEARQRWPVRYSRKGSDSLLKQEPDEDEEMKARCHYLAANVDDEIYHLDDDVYVKAGPDEENYIGRITEFFEGVDRGSYFSCQWFFRTADTVISSKLLKVHDHRHNHKRVFLSKEKNDNLIECIVSKVKIAHVDPNMTPQARAHAISDCDLYYDMSYSVAYSTFANLPADNDGALGSEATSNISCDDADNSSKGKLSADIVAPYSEQTETASLLDLYSGCGAMSTGLCLGFAFSGINLETRWAVDINKYACACLKHNHPYSQVRNEKTEDFLALIQQWDALCRKYVVHKNDTLEPSIDMPLNDADDVNEPLPEDIFDVEELLEICYGDPSNTGKNGLWFKVRWKGYDPSYDTWEPIDGLSDCPERIKEFVEKGHKENILPLPGAVDVICGGPPCQGISGFNRFRKHNDPLEDEKNKQLVVFMDIVKYLRPKYVLMENVVDILKFADGFLGRYAMSCLVAMNYQARLGMMAAGYYGLPQFRMRAFLWGALPSMVLPKFPLPTHDAVVRGIVPTTFSQSVVAYNEVDTRCLRKALLLADAISDLPKVGNDQPKDVIEYSVAPKTEFQRYIRNNRKDIQDYSFRGDDPSEEGKLFDHQPLKLNKDDYERVQRIPVKKGANFRDLKGVIVGPDNTVRLDPNISRERLSSGKPLVPDYAISFVKGKSTKPFGRLWWDETVPTVVTRAEPHNQIILHPSQDRVLTIRENARLQGFPDYYRLIGPLKEKYIQVGNAVAIPVARALGYALGLAYRGESDGDRAVLKLPESFIYADQETVVKSSAGTPGSEIADSEQLFE.

Disordered regions lie at residues 1 to 196 (MVPE…GALA) and 230 to 272 (CVGE…DEAR). Residues 29–41 (AEAEAVADLDEID) are compositionally biased toward acidic residues. Composition is skewed to basic and acidic residues over residues 42-79 (REMS…EKAA), 92-129 (REMP…EKAA), and 147-157 (SRGKRQRGVEK). Positions 158-167 (VKRRTRKKTA) are enriched in basic residues. Residues 252 to 262 (RRVEDSDDHFV) show a composition bias toward basic and acidic residues. Positions 312-436 (EIYHLDDDVY…VAYSTFANLP (125 aa)) constitute a BAH domain. Positions 479–1017 (ASLLDLYSGC…YALGLAYRGE (539 aa)) constitute an SAM-dependent MTase C5-type domain. Residues 584–649 (FDVEELLEIC…KGHKENILPL (66 aa)) form the Chromo domain. The active site involves cysteine 662.

This sequence belongs to the class I-like SAM-binding methyltransferase superfamily. C5-methyltransferase family.

It localises to the nucleus. The enzyme catalyses a 2'-deoxycytidine in DNA + S-adenosyl-L-methionine = a 5-methyl-2'-deoxycytidine in DNA + S-adenosyl-L-homocysteine + H(+). Functionally, involved in CpXpG DNA methylation. May not play a major role in maintaining CpXpG methylation. This is DNA (cytosine-5)-methyltransferase CMT1 from Oryza sativa subsp. japonica (Rice).